The chain runs to 522 residues: Sorting nexin-1 (522 aa).

2 disordered regions span residues methionine 1–glutamate 84 and serine 115–glutamine 142. Residues serine 32 and serine 39 each carry the phosphoserine modification. Acidic residues predominate over residues glutamate 35 to aspartate 45. Phosphothreonine occurs at positions 41 and 48. Positions lysine 55 to lysine 73 are enriched in polar residues. 2 positions are modified to phosphoserine: serine 58 and serine 72. Residues glutamate 132–glutamine 142 show a composition bias toward acidic residues. Positions phenylalanine 143–arginine 272 constitute a PX domain. A 1,2-diacyl-sn-glycero-3-phospho-(1D-myo-inositol-3-phosphate) contacts are provided by arginine 186, serine 188, and lysine 214. Serine 188 carries the phosphoserine modification. N6-acetyllysine is present on lysine 237. Arginine 238 contacts a 1,2-diacyl-sn-glycero-3-phospho-(1D-myo-inositol-3-phosphate). At serine 280 the chain carries Phosphoserine. The tract at residues glycine 281 to methionine 298 is membrane-binding amphipathic helix. In terms of domain architecture, BAR spans methionine 302–serine 522.

This sequence belongs to the sorting nexin family. As to quaternary structure, predominantly forms heterodimers with BAR domain-containing sorting nexins SNX5, SNX6 and SNX32; can self-associate to form homodimers. The heterodimers are proposed to self-assemble into helical arrays on the membrane to stabilize and expand local membrane curvature underlying endosomal tubule formation. Thought to be a component of the originally described retromer complex (also called SNX-BAR retromer) which is a pentamer containing the heterotrimeric retromer cargo-selective complex (CSC), also described as vacuolar protein sorting subcomplex (VPS) and a heterodimeric membrane-deforming subcomplex formed between SNX1 or SNX2 and SNX5 or SNX6 (also called SNX-BAR subcomplex); the respective CSC and SNX-BAR subcomplexes associate with low affinity. Interacts with SNX5, SNX6, SNX32, VPS26A, VPS29, VPS35, DRD5, DENND5A, KALRN, RHOG (GDP-bound form). The interaction with SNX2 is reported controversially. Interacts with DNAJC13; prevented by presence of HGS. Interacts with HGS.

Its subcellular location is the endosome membrane. It is found in the golgi apparatus. The protein resides in the trans-Golgi network membrane. It localises to the early endosome membrane. The protein localises to the cell projection. Its subcellular location is the lamellipodium. Involved in several stages of intracellular trafficking. Interacts with membranes containing phosphatidylinositol 3-phosphate (PtdIns(3P)) or phosphatidylinositol 3,5-bisphosphate (PtdIns(3,5)P2). Acts in part as component of the retromer membrane-deforming SNX-BAR subcomplex. The SNX-BAR retromer mediates retrograde transport of cargo proteins from endosomes to the trans-Golgi network (TGN) and is involved in endosome-to-plasma membrane transport for cargo protein recycling. The SNX-BAR subcomplex functions to deform the donor membrane into a tubular profile called endosome-to-TGN transport carrier (ETC). Can sense membrane curvature and has in vitro vesicle-to-membrane remodeling activity. Involved in retrograde endosome-to-TGN transport of lysosomal enzyme receptors (IGF2R, M6PR and SORT1) and Shiginella dysenteria toxin stxB. Plays a role in targeting ligand-activated EGFR to the lysosomes for degradation after endocytosis from the cell surface and release from the Golgi. Involvement in retromer-independent endocytic trafficking of P2RY1 and lysosomal degradation of protease-activated receptor-1/F2R. Promotes KALRN- and RHOG-dependent but retromer-independent membrane remodeling such as lamellipodium formation; the function is dependent on GEF activity of KALRN. Required for endocytosis of DRD5 upon agonist stimulation but not for basal receptor trafficking. The polypeptide is Sorting nexin-1 (SNX1) (Homo sapiens (Human)).